A 209-amino-acid chain; its full sequence is Ribose 1,5-bisphosphate phosphokinase PhnN (209 aa).

27–34 (GPSGGGKD) serves as a coordination point for ATP.

It belongs to the ribose 1,5-bisphosphokinase family.

It carries out the reaction alpha-D-ribose 1,5-bisphosphate + ATP = 5-phospho-alpha-D-ribose 1-diphosphate + ADP. It participates in metabolic intermediate biosynthesis; 5-phospho-alpha-D-ribose 1-diphosphate biosynthesis; 5-phospho-alpha-D-ribose 1-diphosphate from D-ribose 5-phosphate (route II): step 3/3. In terms of biological role, catalyzes the phosphorylation of ribose 1,5-bisphosphate to 5-phospho-D-ribosyl alpha-1-diphosphate (PRPP). The polypeptide is Ribose 1,5-bisphosphate phosphokinase PhnN (Chelativorans sp. (strain BNC1)).